The primary structure comprises 560 residues: MSINRRSKNITEGVARAPNRSMYYAMGYQEADFKKPMIGVANGHSTITPCNSGLQKLADAAVEGIEAAGGNAQIFGTPTISDGMAMGTEGMKYSLVSREVIADCVETCVGGQWMDGVLVVGGCDKNMPGGMMGMLRANVPAIYVYGGTILPGKYKGQDLNIVSVFEAVGQFTAGNMSEEDFCQIERRAIPGSGSCGGMYTANTMSSAFEALGMSLPFASTMANVEDPIVAHTKEAARVLVEAVKADLKPRDIVTRKSIENAVAVIMATGGSTNAVLHFLAIAHAAGVEWTIDDFERVRRKVPVLCDLKPSGRYLAIDLHRAGGIPQVMKTLLAAGLIHGDCITITGRTVAENLADIPDAPRADQDVIRPITKPMYEQGHLAILKGNLSPEGAVAKITGLKNPSITGPARVFDDEQSALAAIMAKQIQAGDVMVLRYLGPMGGPGMPEMLAPTGALIGQGLGESVGLITDGRFSGGTWGMVVGHVAPEAAAGGTIALVQEGDSITIDAHTLVLNLNVSEAEIAKRRAAWKAPAPRYTRGVLAKFAKNASSASSGAVLDRFE.

Cysteine 50 serves as a coordination point for [2Fe-2S] cluster. Aspartate 82 contributes to the Mg(2+) binding site. Cysteine 123 is a [2Fe-2S] cluster binding site. Mg(2+) is bound by residues aspartate 124 and lysine 125. Residue lysine 125 is modified to N6-carboxylysine. Residue cysteine 195 participates in [2Fe-2S] cluster binding. Mg(2+) is bound at residue glutamate 447. The active-site Proton acceptor is the serine 473.

This sequence belongs to the IlvD/Edd family. As to quaternary structure, homodimer. It depends on [2Fe-2S] cluster as a cofactor. Requires Mg(2+) as cofactor.

The enzyme catalyses (2R)-2,3-dihydroxy-3-methylbutanoate = 3-methyl-2-oxobutanoate + H2O. It catalyses the reaction (2R,3R)-2,3-dihydroxy-3-methylpentanoate = (S)-3-methyl-2-oxopentanoate + H2O. It participates in amino-acid biosynthesis; L-isoleucine biosynthesis; L-isoleucine from 2-oxobutanoate: step 3/4. Its pathway is amino-acid biosynthesis; L-valine biosynthesis; L-valine from pyruvate: step 3/4. Functionally, functions in the biosynthesis of branched-chain amino acids. Catalyzes the dehydration of (2R,3R)-2,3-dihydroxy-3-methylpentanoate (2,3-dihydroxy-3-methylvalerate) into 2-oxo-3-methylpentanoate (2-oxo-3-methylvalerate) and of (2R)-2,3-dihydroxy-3-methylbutanoate (2,3-dihydroxyisovalerate) into 2-oxo-3-methylbutanoate (2-oxoisovalerate), the penultimate precursor to L-isoleucine and L-valine, respectively. The polypeptide is Dihydroxy-acid dehydratase (Methylibium petroleiphilum (strain ATCC BAA-1232 / LMG 22953 / PM1)).